A 260-amino-acid chain; its full sequence is 3-alpha-(or 20-beta)-hydroxysteroid dehydrogenase (260 aa).

The NAD(+) site is built by Arg-17, Met-19, Asp-38, Asp-61, Val-62, Asn-88, Tyr-153, Lys-157, Val-186, Thr-188, and Thr-191. Catalysis depends on Tyr-153, which acts as the Proton acceptor.

This sequence belongs to the short-chain dehydrogenases/reductases (SDR) family. In terms of assembly, homotetramer.

The enzyme catalyses androstan-3alpha,17beta-diol + NAD(+) = 17beta-hydroxyandrostanone + NADH + H(+). It functions in the pathway lipid metabolism; steroid degradation. Probably involved in steroid metabolism. The protein is 3-alpha-(or 20-beta)-hydroxysteroid dehydrogenase (fabG3) of Mycobacterium bovis (strain ATCC BAA-935 / AF2122/97).